We begin with the raw amino-acid sequence, 128 residues long: MENVPNVYFNPVFIEPTFKHSLLSVYKHRLIVLFEVFIVFILIYVFFRSELNMFFMPKRKIPDPIDRLRRANLACEDDKLMIYGLPWMTTQTSALSINSKPIVYKDCAKLLRSINGSQPVSLNDVLRR.

The Intravirion portion of the chain corresponds to 1 to 30 (MENVPNVYFNPVFIEPTFKHSLLSVYKHRL). Residues 31–51 (IVLFEVFIVFILIYVFFRSEL) traverse the membrane as a helical; Signal-anchor for type III membrane protein segment. At 52–107 (NMFFMPKRKIPDPIDRLRRANLACEDDKLMIYGLPWMTTQTSALSINSKPIVYKDC) the chain is on the virion surface side. An intrachain disulfide couples Cys75 to Cys107.

It belongs to the orthopoxvirus OPG099 family. In terms of assembly, interacts with OPG086. Component of the entry fusion complex (EFC) composed of OPG053, OPG076, OPG086, OPG094, OPG095, OPG099, OPG107, OPG143, OPG104J5, OPG147 and OPG155. Except for OPG095 and OPG053, each of the EFC proteins is required for assembly or stability of the complex. In terms of processing, most cysteines are linked by disulfide bonds. They are created by the viral disulfide bond formation pathway, a poxvirus-specific redox pathway that operates on the cytoplasmic side of the MV membranes. Post-translationally, unglycosylated because produced in viral factories instead of the classic ER -Golgi route.

Its subcellular location is the virion membrane. Its function is as follows. Component of the entry fusion complex (EFC), which consists of 11 proteins. During cell infection, this complex mediates entry of the virion core into the host cytoplasm by a two-step mechanism consisting of lipid mixing of the viral and cellular membranes and subsequent pore formation. This is Entry-fusion complex protein OPG094 (OPG099) from Vaccinia virus (strain Ankara) (VACV).